The primary structure comprises 31 residues: Cyclotide psybry B (31 aa).

The cyclopeptide (Gly-Asn) cross-link spans 1 to 31; sequence GFNPCGETCWNKPTCHAPGCTCSIANICVRN. 3 disulfide bridges follow: cysteine 5/cysteine 20, cysteine 9/cysteine 22, and cysteine 15/cysteine 28.

This is a cyclic peptide.

Functionally, probably participates in a plant defense mechanism. The polypeptide is Cyclotide psybry B (Psychotria brachyceras).